Here is a 655-residue protein sequence, read N- to C-terminus: Polycyclic ketone monooxygenase (655 aa).

Residues Gly-89, Asp-113, Ala-114, Thr-121, Trp-124, Cys-132, Asp-133, Tyr-139, and Val-183 each contribute to the FAD site. Positions 277, 280, 301, 425, and 452 each coordinate NADPH. Residues Cys-424 and Cys-596 are joined by a disulfide bond. FAD is bound by residues Thr-492 and Asn-541. Tyr-600 serves as a coordination point for NADPH.

It belongs to the FAD-binding monooxygenase family. It depends on FAD as a cofactor.

Its function is as follows. Polycyclic ketone monooxygenase (PockeMO) that displays excellent enantioselectivity, acts on various ketones, and is particularly active on polycyclic molecules. Breaks C-C bonds through the insertion of a single oxygen atom adjacent to a carbonyl moiety, yielding esters or lactones from ketones. PockeMO is able to convert linear ketones (including cyclohexane and to a lesser extend 4-octanone), cyclic ketones (including cyclohexanone and cyclooctanone), bicyclic ketones and polycyclic ketones (steroids). Performs oxidation of the keto functionalities at both the A and D rings of steroids. Particularly, oxidizes the A ring of stanolone or pregnenolone. Selectively oxidizes the D ring of androstenedione or androstadienedione, steroids with keto groups in both the A and D rings, to yield the pharmaceutically relevant testo(lo)lactone. This Thermothelomyces thermophilus (strain ATCC 42464 / BCRC 31852 / DSM 1799) (Sporotrichum thermophile) protein is Polycyclic ketone monooxygenase.